The primary structure comprises 1053 residues: Carbamoyl phosphate synthase large chain (1053 aa).

Positions 1-397 (MPKNTSLKKV…GFKKALRSLD (397 aa)) are carboxyphosphate synthetic domain. Residues arginine 127, arginine 167, glycine 173, glycine 174, glutamate 206, valine 208, glutamate 213, glycine 239, valine 240, histidine 241, glutamine 282, and glutamate 294 each contribute to the ATP site. Residues 131–323 (KKLMLEIGEP…IARVAAKVAI (193 aa)) enclose the ATP-grasp 1 domain. 3 residues coordinate Mg(2+): glutamine 282, glutamate 294, and asparagine 296. Glutamine 282, glutamate 294, and asparagine 296 together coordinate Mn(2+). The tract at residues 398-530 (TDIYRHTDLN…YSTWEQECEL (133 aa)) is oligomerization domain. The carbamoyl phosphate synthetic domain stretch occupies residues 531-919 (TQSDRKKILI…YKASQAADNT (389 aa)). An ATP-grasp 2 domain is found at 661–852 (SVLLDQNNIP…LAKIAAKLML (192 aa)). The ATP site is built by arginine 697, arginine 736, leucine 738, glutamate 743, glycine 768, valine 769, histidine 770, serine 771, glutamine 811, and glutamate 823. Residues glutamine 811, glutamate 823, and asparagine 825 each coordinate Mg(2+). Mn(2+)-binding residues include glutamine 811, glutamate 823, and asparagine 825. The 136-residue stretch at 918 to 1053 (NTIPLKGNVF…TVEPLSHYHS (136 aa)) folds into the MGS-like domain. Residues 920 to 1053 (IPLKGNVFIS…TVEPLSHYHS (134 aa)) form an allosteric domain region.

This sequence belongs to the CarB family. Composed of two chains; the small (or glutamine) chain promotes the hydrolysis of glutamine to ammonia, which is used by the large (or ammonia) chain to synthesize carbamoyl phosphate. Tetramer of heterodimers (alpha,beta)4. Mg(2+) serves as cofactor. It depends on Mn(2+) as a cofactor.

The catalysed reaction is hydrogencarbonate + L-glutamine + 2 ATP + H2O = carbamoyl phosphate + L-glutamate + 2 ADP + phosphate + 2 H(+). It catalyses the reaction hydrogencarbonate + NH4(+) + 2 ATP = carbamoyl phosphate + 2 ADP + phosphate + 2 H(+). It functions in the pathway amino-acid biosynthesis; L-arginine biosynthesis; carbamoyl phosphate from bicarbonate: step 1/1. The protein operates within pyrimidine metabolism; UMP biosynthesis via de novo pathway; (S)-dihydroorotate from bicarbonate: step 1/3. In terms of biological role, large subunit of the glutamine-dependent carbamoyl phosphate synthetase (CPSase). CPSase catalyzes the formation of carbamoyl phosphate from the ammonia moiety of glutamine, carbonate, and phosphate donated by ATP, constituting the first step of 2 biosynthetic pathways, one leading to arginine and/or urea and the other to pyrimidine nucleotides. The large subunit (synthetase) binds the substrates ammonia (free or transferred from glutamine from the small subunit), hydrogencarbonate and ATP and carries out an ATP-coupled ligase reaction, activating hydrogencarbonate by forming carboxy phosphate which reacts with ammonia to form carbamoyl phosphate. The protein is Carbamoyl phosphate synthase large chain of Methanocorpusculum labreanum (strain ATCC 43576 / DSM 4855 / Z).